The sequence spans 309 residues: 2-phospho-L-lactate transferase (309 aa).

2 residues coordinate 7,8-didemethyl-8-hydroxy-5-deazariboflavin: D50 and R89.

This sequence belongs to the CofD family. As to quaternary structure, homodimer. The cofactor is Mg(2+).

The enzyme catalyses (2S)-lactyl-2-diphospho-5'-guanosine + 7,8-didemethyl-8-hydroxy-5-deazariboflavin = oxidized coenzyme F420-0 + GMP + H(+). It participates in cofactor biosynthesis; coenzyme F420 biosynthesis. Its function is as follows. Catalyzes the transfer of the 2-phospholactate moiety from (2S)-lactyl-2-diphospho-5'-guanosine to 7,8-didemethyl-8-hydroxy-5-deazariboflavin (FO) with the formation of oxidized coenzyme F420-0 and GMP. This is 2-phospho-L-lactate transferase from Methanococcus maripaludis (strain DSM 14266 / JCM 13030 / NBRC 101832 / S2 / LL).